Consider the following 229-residue polypeptide: Urease accessory protein UreF (229 aa).

Belongs to the UreF family. In terms of assembly, ureD, UreF and UreG form a complex that acts as a GTP-hydrolysis-dependent molecular chaperone, activating the urease apoprotein by helping to assemble the nickel containing metallocenter of UreC. The UreE protein probably delivers the nickel.

The protein localises to the cytoplasm. Required for maturation of urease via the functional incorporation of the urease nickel metallocenter. This chain is Urease accessory protein UreF, found in Staphylococcus epidermidis (strain ATCC 12228 / FDA PCI 1200).